We begin with the raw amino-acid sequence, 663 residues long: DNA ligase (663 aa).

NAD(+) is bound by residues 31 to 35 (DYEYD), 80 to 81 (SL), and Glu109. The active-site N6-AMP-lysine intermediate is Lys111. Positions 132, 167, 283, and 307 each coordinate NAD(+). Zn(2+)-binding residues include Cys401, Cys404, Cys419, and Cys424. The 78-residue stretch at 586 to 663 (KIDNRFLGKT…TEEDLKDMIK (78 aa)) folds into the BRCT domain.

This sequence belongs to the NAD-dependent DNA ligase family. LigA subfamily. It depends on Mg(2+) as a cofactor. The cofactor is Mn(2+).

It carries out the reaction NAD(+) + (deoxyribonucleotide)n-3'-hydroxyl + 5'-phospho-(deoxyribonucleotide)m = (deoxyribonucleotide)n+m + AMP + beta-nicotinamide D-nucleotide.. In terms of biological role, DNA ligase that catalyzes the formation of phosphodiester linkages between 5'-phosphoryl and 3'-hydroxyl groups in double-stranded DNA using NAD as a coenzyme and as the energy source for the reaction. It is essential for DNA replication and repair of damaged DNA. This chain is DNA ligase, found in Clostridium kluyveri (strain NBRC 12016).